The primary structure comprises 1400 residues: DNA-directed RNA polymerase subunit beta' (1400 aa).

The Zn(2+) site is built by C71, C73, C86, and C89. D462, D464, and D466 together coordinate Mg(2+). C810, C884, C891, and C894 together coordinate Zn(2+).

This sequence belongs to the RNA polymerase beta' chain family. As to quaternary structure, the RNAP catalytic core consists of 2 alpha, 1 beta, 1 beta' and 1 omega subunit. When a sigma factor is associated with the core the holoenzyme is formed, which can initiate transcription. Mg(2+) is required as a cofactor. Zn(2+) serves as cofactor.

It catalyses the reaction RNA(n) + a ribonucleoside 5'-triphosphate = RNA(n+1) + diphosphate. In terms of biological role, DNA-dependent RNA polymerase catalyzes the transcription of DNA into RNA using the four ribonucleoside triphosphates as substrates. The chain is DNA-directed RNA polymerase subunit beta' from Rhodopseudomonas palustris (strain BisA53).